The chain runs to 351 residues: Alternative oxidase, mitochondrial (351 aa).

Residues L147–L167 traverse the membrane as a helical segment. Fe cation is bound by residues E154, E193, and H196. Residues L212–S232 traverse the membrane as a helical segment. Residues E244, E245, E299, and H302 each coordinate Fe cation. Residues A322–I351 form a disordered region.

It belongs to the alternative oxidase family. It depends on Fe cation as a cofactor.

Its subcellular location is the mitochondrion inner membrane. Catalyzes cyanide-resistant oxygen consumption. May increase respiration when the cytochrome respiratory pathway is restricted, or in response to low temperatures. This is Alternative oxidase, mitochondrial (aox1) from Aspergillus niger.